Here is a 407-residue protein sequence, read N- to C-terminus: 1-deoxy-D-xylulose 5-phosphate reductoisomerase (407 aa).

NADPH contacts are provided by Thr-22, Gly-23, Ser-24, Ile-25, Gly-48, Asn-51, and Asn-128. Lys-129 contributes to the 1-deoxy-D-xylulose 5-phosphate binding site. Glu-130 contacts NADPH. Position 152 (Asp-152) interacts with Mn(2+). Positions 153, 154, 178, and 201 each coordinate 1-deoxy-D-xylulose 5-phosphate. Residue Glu-154 participates in Mn(2+) binding. Position 207 (Gly-207) interacts with NADPH. Residues Ser-214, Asn-219, Lys-220, and Glu-223 each coordinate 1-deoxy-D-xylulose 5-phosphate. Position 223 (Glu-223) interacts with Mn(2+).

This sequence belongs to the DXR family. The cofactor is Mg(2+). Mn(2+) is required as a cofactor.

The enzyme catalyses 2-C-methyl-D-erythritol 4-phosphate + NADP(+) = 1-deoxy-D-xylulose 5-phosphate + NADPH + H(+). Its pathway is isoprenoid biosynthesis; isopentenyl diphosphate biosynthesis via DXP pathway; isopentenyl diphosphate from 1-deoxy-D-xylulose 5-phosphate: step 1/6. In terms of biological role, catalyzes the NADPH-dependent rearrangement and reduction of 1-deoxy-D-xylulose-5-phosphate (DXP) to 2-C-methyl-D-erythritol 4-phosphate (MEP). This chain is 1-deoxy-D-xylulose 5-phosphate reductoisomerase, found in Mycobacterium avium (strain 104).